The sequence spans 387 residues: Protein WHAT'S THIS FACTOR 9, mitochondrial (387 aa).

The N-terminal 24 residues, 1–24 (MLSIRRHAKTVASSCTNLTQKRTY), are a transit peptide targeting the mitochondrion. The region spanning 32 to 358 (KRDPYFDNIE…KKYIQLMKNS (327 aa)) is the PORR domain.

The protein resides in the mitochondrion. RNA-binding protein involved in group II intron splicing. Binds specific group II introns and promotes their splicing (e.g. rpl2 and ccmFC). The chain is Protein WHAT'S THIS FACTOR 9, mitochondrial from Arabidopsis thaliana (Mouse-ear cress).